We begin with the raw amino-acid sequence, 381 residues long: Cytochrome b (381 aa).

The next 4 helical transmembrane spans lie at 34-54, 78-99, 114-134, and 179-199; these read FGSLLGLCLIIQILTGLFLAM, WLIRNIHANGASLFFICVYLHI, WNIGVILLFLLMATAFVGYVL, and FFAFHFLLPFLILALTVIHLL. The heme b site is built by His84 and His98. His183 and His197 together coordinate heme b. His202 serves as a coordination point for a ubiquinone. 4 consecutive transmembrane segments (helical) span residues 227 to 247, 289 to 309, 321 to 341, and 348 to 368; these read YKDLLGFFVMIFLLATLALFT, LGGVLALLFSIFILMLVPLLH, LTQIFFWFLVANSIILTWIGG, and FIMVGQIASISYFSLFLIIMP.

It belongs to the cytochrome b family. In terms of assembly, the cytochrome bc1 complex contains 3 respiratory subunits (MT-CYB, CYC1 and UQCRFS1), 2 core proteins (UQCRC1 and UQCRC2) and probably 6 low-molecular weight proteins. Requires heme b as cofactor.

Its subcellular location is the mitochondrion inner membrane. Component of the ubiquinol-cytochrome c reductase complex (complex III or cytochrome b-c1 complex) that is part of the mitochondrial respiratory chain. The b-c1 complex mediates electron transfer from ubiquinol to cytochrome c. Contributes to the generation of a proton gradient across the mitochondrial membrane that is then used for ATP synthesis. The protein is Cytochrome b (mt-cyb) of Negaprion brevirostris (Lemon shark).